A 152-amino-acid chain; its full sequence is 3-hydroxyacyl-[acyl-carrier-protein] dehydratase FabZ (152 aa).

Residue H57 is part of the active site.

This sequence belongs to the thioester dehydratase family. FabZ subfamily.

Its subcellular location is the cytoplasm. The enzyme catalyses a (3R)-hydroxyacyl-[ACP] = a (2E)-enoyl-[ACP] + H2O. Functionally, involved in unsaturated fatty acids biosynthesis. Catalyzes the dehydration of short chain beta-hydroxyacyl-ACPs and long chain saturated and unsaturated beta-hydroxyacyl-ACPs. The protein is 3-hydroxyacyl-[acyl-carrier-protein] dehydratase FabZ of Xanthomonas axonopodis pv. citri (strain 306).